Reading from the N-terminus, the 151-residue chain is Acidic phospholipase A2 1 (151 aa).

An N-terminal signal peptide occupies residues 1 to 21 (MNPAHLLVLSAVCVSLLGASS). A propeptide spanning residues 22–27 (IPPQPL) is cleaved from the precursor. Cystine bridges form between Cys38/Cys104, Cys54/Cys151, Cys56/Cys72, Cys71/Cys132, Cys78/Cys125, Cys88/Cys118, and Cys111/Cys123. Ca(2+) is bound by residues Tyr55, Gly57, and Gly59. His75 is a catalytic residue. Asp76 lines the Ca(2+) pocket. Residue Asp126 is part of the active site.

It depends on Ca(2+) as a cofactor. Expressed by the venom gland.

Its subcellular location is the secreted. The enzyme catalyses a 1,2-diacyl-sn-glycero-3-phosphocholine + H2O = a 1-acyl-sn-glycero-3-phosphocholine + a fatty acid + H(+). Functionally, snake venom phospholipase A2 (PLA2) that may exhibit cardiotoxicity, myotoxicity, antiplatelet activity, and edema-inducing activity. PLA2 catalyzes the calcium-dependent hydrolysis of the 2-acyl groups in 3-sn-phosphoglycerides. In Ophiophagus hannah (King cobra), this protein is Acidic phospholipase A2 1.